A 138-amino-acid polypeptide reads, in one-letter code: Acidic phospholipase A2 Cvv-E6e (138 aa).

Residues M1–G16 form the signal peptide. 7 cysteine pairs are disulfide-bonded: C42–C131, C44–C60, C59–C111, C65–C138, C66–C104, C73–C97, and C91–C102. Ca(2+) contacts are provided by Y43, G45, and G47. The active site involves H63. D64 contributes to the Ca(2+) binding site. D105 is an active-site residue.

Ca(2+) serves as cofactor. In terms of tissue distribution, expressed by the venom gland.

Its subcellular location is the secreted. The enzyme catalyses a 1,2-diacyl-sn-glycero-3-phosphocholine + H2O = a 1-acyl-sn-glycero-3-phosphocholine + a fatty acid + H(+). In terms of biological role, snake venom phospholipase A2 (PLA2) that significantly inhibits ADP-induced platelet aggregation in platelet-rich plasma of human, rabbit and guinea pig. PLA2 catalyzes the calcium-dependent hydrolysis of the 2-acyl groups in 3-sn-phosphoglycerides. In Crotalus viridis viridis (Prairie rattlesnake), this protein is Acidic phospholipase A2 Cvv-E6e.